We begin with the raw amino-acid sequence, 520 residues long: Hydroxymethylglutaryl-CoA synthase, cytoplasmic (520 aa).

Ser-4 bears the Phosphoserine mark. A (3S)-3-hydroxy-3-methylglutaryl-CoA-binding site is contributed by Ala-44. 44 to 46 (AGK) serves as a coordination point for CoA. Position 46 is an N6-acetyllysine (Lys-46). Glu-95 serves as the catalytic Proton donor/acceptor. Residues Cys-129, Asn-167, Thr-171, Ser-221, and His-264 each coordinate (3S)-3-hydroxy-3-methylglutaryl-CoA. Cys-129 acts as the Acyl-thioester intermediate in catalysis. Residue Asn-167 participates in CoA binding. Residue Ser-221 coordinates CoA. Catalysis depends on His-264, which acts as the Proton donor/acceptor. CoA-binding residues include Lys-269 and Lys-273. The (3S)-3-hydroxy-3-methylglutaryl-CoA site is built by Lys-273, Asn-343, and Ser-377. At Lys-273 the chain carries N6-acetyllysine. Thr-476 is modified (phosphothreonine). Residues 492-520 (HIPSPAKKVPRLPATAAEPEAAVISNGEH) form a disordered region. Phosphoserine occurs at positions 495 and 516.

It belongs to the thiolase-like superfamily. HMG-CoA synthase family. Homodimer.

It localises to the cytoplasm. It carries out the reaction acetoacetyl-CoA + acetyl-CoA + H2O = (3S)-3-hydroxy-3-methylglutaryl-CoA + CoA + H(+). The protein operates within metabolic intermediate biosynthesis; (R)-mevalonate biosynthesis; (R)-mevalonate from acetyl-CoA: step 2/3. Its function is as follows. Catalyzes the condensation of acetyl-CoA with acetoacetyl-CoA to form HMG-CoA, which is converted by HMG-CoA reductase (HMGCR) into mevalonate, a precursor for cholesterol synthesis. The protein is Hydroxymethylglutaryl-CoA synthase, cytoplasmic of Pongo abelii (Sumatran orangutan).